The chain runs to 96 residues: ATP synthase subunit f, mitochondrial (96 aa).

Belongs to the ATPase F chain family.

The protein localises to the mitochondrion. It is found in the mitochondrion inner membrane. Functionally, mitochondrial membrane ATP synthase (F(1)F(0) ATP synthase or Complex V) produces ATP from ADP in the presence of a proton gradient across the membrane which is generated by electron transport complexes of the respiratory chain. F-type ATPases consist of two structural domains, F(1) - containing the extramembraneous catalytic core and F(0) - containing the membrane proton channel, linked together by a central stalk and a peripheral stalk. During catalysis, ATP synthesis in the catalytic domain of F(1) is coupled via a rotary mechanism of the central stalk subunits to proton translocation. The chain is ATP synthase subunit f, mitochondrial (atp17) from Schizosaccharomyces pombe (strain 972 / ATCC 24843) (Fission yeast).